We begin with the raw amino-acid sequence, 351 residues long: UDP-N-acetylglucosamine--N-acetylmuramyl-(pentapeptide) pyrophosphoryl-undecaprenol N-acetylglucosamine transferase (351 aa).

UDP-N-acetyl-alpha-D-glucosamine-binding positions include 13–15 (TGG), N125, R161, S189, I241, 260–265 (ALTVCE), and Q285.

It belongs to the glycosyltransferase 28 family. MurG subfamily.

The protein localises to the cell inner membrane. The enzyme catalyses di-trans,octa-cis-undecaprenyl diphospho-N-acetyl-alpha-D-muramoyl-L-alanyl-D-glutamyl-meso-2,6-diaminopimeloyl-D-alanyl-D-alanine + UDP-N-acetyl-alpha-D-glucosamine = di-trans,octa-cis-undecaprenyl diphospho-[N-acetyl-alpha-D-glucosaminyl-(1-&gt;4)]-N-acetyl-alpha-D-muramoyl-L-alanyl-D-glutamyl-meso-2,6-diaminopimeloyl-D-alanyl-D-alanine + UDP + H(+). It participates in cell wall biogenesis; peptidoglycan biosynthesis. Its function is as follows. Cell wall formation. Catalyzes the transfer of a GlcNAc subunit on undecaprenyl-pyrophosphoryl-MurNAc-pentapeptide (lipid intermediate I) to form undecaprenyl-pyrophosphoryl-MurNAc-(pentapeptide)GlcNAc (lipid intermediate II). This chain is UDP-N-acetylglucosamine--N-acetylmuramyl-(pentapeptide) pyrophosphoryl-undecaprenol N-acetylglucosamine transferase, found in Haemophilus influenzae (strain PittGG).